Reading from the N-terminus, the 211-residue chain is Troponin I, cardiac muscle (211 aa).

The segment at 1–24 is disordered; sequence MADESSDAAGEPQPAPAPVRRRSS. Position 2 is an N-acetylalanine (A2). Phosphoserine is present on residues S5 and S6. Phosphoserine; by PKA and PKD/PRKD1 occurs at positions 23 and 24. Y27 carries the phosphotyrosine modification. Phosphothreonine; by STK4/MST1 is present on T32. Positions 33–80 are involved in binding TNC; the sequence is EPHAKKKSKISASRKLQLKTLMLQIAKQEMEREAEERRGEKGRVLRTR. Phosphoserine; by PKC/PRKCE is present on residues S43 and S45. T52 carries the post-translational modification Phosphothreonine; by STK4/MST1. T79 bears the Phosphothreonine mark. Phosphothreonine; by STK4/MST1 occurs at positions 130 and 144. An involved in binding TNC and actin region spans residues 130–151; sequence TQKIYDLRGKFKRPTLRRVRIS. Phosphoserine occurs at positions 151, 167, and 200.

It belongs to the troponin I family. Interacts with TRIM63. Binds to actin and tropomyosin. Interacts with STK4/MST1. In terms of processing, phosphorylated at Ser-23 and Ser-24 by PRKD1; phosphorylation reduces myofilament calcium sensitivity. Phosphorylated preferentially at Thr-32. Phosphorylation by STK4/MST1 alters its binding affinity to TNNC1 (cardiac Tn-C) and TNNT2 (cardiac Tn-T). Phosphorylated at Ser-43 and Ser-45 by PRKCE; phosphorylation increases myocardium contractile dysfunction.

Functionally, troponin I is the inhibitory subunit of troponin, the thin filament regulatory complex which confers calcium-sensitivity to striated muscle actomyosin ATPase activity. The sequence is that of Troponin I, cardiac muscle (Tnni3) from Mus musculus (Mouse).